The primary structure comprises 618 residues: Chaperone protein HtpG (618 aa).

The a; substrate-binding stretch occupies residues 1 to 340 (MATKHQFQTE…SEDLPLNVSR (340 aa)). Positions 341 to 545 (EILQQNKILA…KEDNNPMMAN (205 aa)) are b. The segment at 546-618 (LMAQMGQKVP…ELNSLLLQSL (73 aa)) is c.

Belongs to the heat shock protein 90 family. Homodimer.

It is found in the cytoplasm. Molecular chaperone. Has ATPase activity. The chain is Chaperone protein HtpG from Helicobacter hepaticus (strain ATCC 51449 / 3B1).